Reading from the N-terminus, the 276-residue chain is Undecaprenyl-diphosphatase (276 aa).

Helical transmembrane passes span 43 to 63, 85 to 105, 109 to 129, 183 to 203, 218 to 238, and 254 to 274; these read RAMA…VWEF, LNLL…ADTI, LFNA…MLWA, AATE…AVYS, VFAI…RALL, and IAFG…WASA.

It belongs to the UppP family.

It localises to the cell inner membrane. It catalyses the reaction di-trans,octa-cis-undecaprenyl diphosphate + H2O = di-trans,octa-cis-undecaprenyl phosphate + phosphate + H(+). Catalyzes the dephosphorylation of undecaprenyl diphosphate (UPP). Confers resistance to bacitracin. In Pseudomonas syringae pv. tomato (strain ATCC BAA-871 / DC3000), this protein is Undecaprenyl-diphosphatase.